Consider the following 261-residue polypeptide: Cytochrome c oxidase subunit 3 (261 aa).

Topologically, residues 1–15 (MAHQAHAYHMVDPSP) are mitochondrial matrix. A helical transmembrane segment spans residues 16–34 (WPLTGAVAALLLTSGLAVW). The Mitochondrial intermembrane segment spans residues 35–40 (FHFKSL). Residues 41–66 (TLLAMGLLLMILTMIQWWRDIIREGT) traverse the membrane as a helical segment. At 67–72 (FQGHHT) the chain is on the mitochondrial matrix side. Residues 73–105 (PPVQKGLRYGMILFITSEVFFFLGFFWAFYHSS) form a helical membrane-spanning segment. Topologically, residues 106-128 (LAPTPELGGIWPPTGITPLDPFE) are mitochondrial intermembrane. A helical transmembrane segment spans residues 129–152 (VPLLNTAVLLASGVTVTWTHHSLM). Residues 153-155 (EGK) are Mitochondrial matrix-facing. Residues 156 to 183 (RTEATQALTLTILLGLYFTALQAMEYYE) traverse the membrane as a helical segment. Over 184–190 (APFTIAD) the chain is Mitochondrial intermembrane. Residues 191-223 (GVYGTTFFVATGFHGLHVIIGSTFLAGCLLRQI) form a helical membrane-spanning segment. Residues 224 to 232 (LYHFTSSHH) lie on the Mitochondrial matrix side of the membrane. Residues 233–256 (FGFEAAAWYWHFVDVVWLFLYVSI) form a helical membrane-spanning segment. Residues 257–261 (YWWGS) are Mitochondrial intermembrane-facing.

This sequence belongs to the cytochrome c oxidase subunit 3 family. In terms of assembly, component of the cytochrome c oxidase (complex IV, CIV), a multisubunit enzyme composed of 14 subunits. The complex is composed of a catalytic core of 3 subunits MT-CO1, MT-CO2 and MT-CO3, encoded in the mitochondrial DNA, and 11 supernumerary subunits COX4I, COX5A, COX5B, COX6A, COX6B, COX6C, COX7A, COX7B, COX7C, COX8 and NDUFA4, which are encoded in the nuclear genome. The complex exists as a monomer or a dimer and forms supercomplexes (SCs) in the inner mitochondrial membrane with NADH-ubiquinone oxidoreductase (complex I, CI) and ubiquinol-cytochrome c oxidoreductase (cytochrome b-c1 complex, complex III, CIII), resulting in different assemblies (supercomplex SCI(1)III(2)IV(1) and megacomplex MCI(2)III(2)IV(2)).

The protein localises to the mitochondrion inner membrane. The catalysed reaction is 4 Fe(II)-[cytochrome c] + O2 + 8 H(+)(in) = 4 Fe(III)-[cytochrome c] + 2 H2O + 4 H(+)(out). Component of the cytochrome c oxidase, the last enzyme in the mitochondrial electron transport chain which drives oxidative phosphorylation. The respiratory chain contains 3 multisubunit complexes succinate dehydrogenase (complex II, CII), ubiquinol-cytochrome c oxidoreductase (cytochrome b-c1 complex, complex III, CIII) and cytochrome c oxidase (complex IV, CIV), that cooperate to transfer electrons derived from NADH and succinate to molecular oxygen, creating an electrochemical gradient over the inner membrane that drives transmembrane transport and the ATP synthase. Cytochrome c oxidase is the component of the respiratory chain that catalyzes the reduction of oxygen to water. Electrons originating from reduced cytochrome c in the intermembrane space (IMS) are transferred via the dinuclear copper A center (CU(A)) of subunit 2 and heme A of subunit 1 to the active site in subunit 1, a binuclear center (BNC) formed by heme A3 and copper B (CU(B)). The BNC reduces molecular oxygen to 2 water molecules using 4 electrons from cytochrome c in the IMS and 4 protons from the mitochondrial matrix. The sequence is that of Cytochrome c oxidase subunit 3 (mt-co3) from Polypterus ornatipinnis (Ornate bichir).